The primary structure comprises 80 residues: Large ribosomal subunit protein eL38 (80 aa).

Belongs to the eukaryotic ribosomal protein eL38 family. As to quaternary structure, component of the large ribosomal subunit (LSU). Mature N.crassa ribosomes consist of a small (40S) and a large (60S) subunit. The 40S small subunit contains 1 molecule of ribosomal RNA (18S rRNA) and at least 32 different proteins. The large 60S subunit contains 3 rRNA molecules (26S, 5.8S and 5S rRNA) and at least 42 different proteins.

The protein resides in the cytoplasm. In terms of biological role, component of the ribosome, a large ribonucleoprotein complex responsible for the synthesis of proteins in the cell. The small ribosomal subunit (SSU) binds messenger RNAs (mRNAs) and translates the encoded message by selecting cognate aminoacyl-transfer RNA (tRNA) molecules. The large subunit (LSU) contains the ribosomal catalytic site termed the peptidyl transferase center (PTC), which catalyzes the formation of peptide bonds, thereby polymerizing the amino acids delivered by tRNAs into a polypeptide chain. The nascent polypeptides leave the ribosome through a tunnel in the LSU and interact with protein factors that function in enzymatic processing, targeting, and the membrane insertion of nascent chains at the exit of the ribosomal tunnel. The protein is Large ribosomal subunit protein eL38 (rpl-38) of Neurospora crassa (strain ATCC 24698 / 74-OR23-1A / CBS 708.71 / DSM 1257 / FGSC 987).